Reading from the N-terminus, the 172-residue chain is CD-NTase-associated protein 7 (172 aa).

The tract at residues 141–172 is required for binding to CdnC and to confer phage immunity; sequence AQSPGINGYLENDKTYSAGGRSLTRTSVRNFV.

It belongs to the bacterial HORMA family. HORMA1 subfamily. As to quaternary structure, forms complexes with CdnC with 1:1 and 2:2 stoichimetry, and a 1:1:6 CdnC:Cap7:Cap6 complex.

Functionally, sensor protein of a CBASS antivirus system. CBASS (cyclic oligonucleotide-based antiphage signaling system) provides immunity against bacteriophage. The CD-NTase protein synthesizes cyclic nucleotides in response to infection; these serve as specific second messenger signals. The signals activate a diverse range of effectors, leading to bacterial cell death and thus abortive phage infection. A type III-C(AAA) CBASS system. Binds to a closure peptide (consensus His-Xaa-Xaa-Ile-Leu-Leu-Thr), which allows it to activate CdnC for second messenger synthesis. Its function is as follows. Protects E.coli strain JP313 against bacteriophage lambda cI- infection. When the cdnC-cap7-cap6-nucC operon is transformed into a susceptible strain it confers bacteriophage immunity. Mutations in the sensor (Cap7 also called HORMA) or effector proteins (CdnC, NucC) but not the disassembly protein (Cap6 also called Trip13) no longer confer immunity. The presence of the intact operon leads to culture collapse and cell death, which occurs before the phage has finished its replication cycle, thus protecting non-infected bacteria by aborting the phage infection and preventing its propagation. The chain is CD-NTase-associated protein 7 from Escherichia coli (strain MS 115-1).